A 401-amino-acid chain; its full sequence is Acetate kinase (401 aa).

N9 serves as a coordination point for Mg(2+). Residue K16 participates in ATP binding. R88 is a substrate binding site. D147 functions as the Proton donor/acceptor in the catalytic mechanism. ATP contacts are provided by residues 207-211 (HLGNG), 282-284 (DCR), and 333-337 (GIGEN). Mg(2+) is bound at residue E388.

This sequence belongs to the acetokinase family. As to quaternary structure, homodimer. The cofactor is Mg(2+). Mn(2+) serves as cofactor.

It localises to the cytoplasm. It catalyses the reaction acetate + ATP = acetyl phosphate + ADP. It functions in the pathway metabolic intermediate biosynthesis; acetyl-CoA biosynthesis; acetyl-CoA from acetate: step 1/2. In terms of biological role, catalyzes the formation of acetyl phosphate from acetate and ATP. Can also catalyze the reverse reaction. The sequence is that of Acetate kinase from Haemophilus influenzae (strain PittEE).